Consider the following 126-residue polypeptide: Larval cuticle protein 2 (126 aa).

The first 16 residues, 1–16 (MFKFVMVFAVLGLAAA), serve as a signal peptide directing secretion. Residues 39–100 (ADGFDTDLVV…PVGAVLPTPP (62 aa)) enclose the Chitin-binding type R&amp;R domain.

Component of the larval cuticle. In Drosophila miranda (Fruit fly), this protein is Larval cuticle protein 2 (Lcp2).